Here is a 216-residue protein sequence, read N- to C-terminus: 2-hydroxy-3-keto-5-methylthiopentenyl-1-phosphate phosphatase (216 aa).

This sequence belongs to the HAD-like hydrolase superfamily. MtnX family.

The catalysed reaction is 2-hydroxy-5-methylsulfanyl-3-oxopent-1-enyl phosphate + H2O = 1,2-dihydroxy-5-(methylsulfanyl)pent-1-en-3-one + phosphate. It participates in amino-acid biosynthesis; L-methionine biosynthesis via salvage pathway; L-methionine from S-methyl-5-thio-alpha-D-ribose 1-phosphate: step 4/6. Dephosphorylates 2-hydroxy-3-keto-5-methylthiopentenyl-1-phosphate (HK-MTPenyl-1-P) yielding 1,2-dihydroxy-3-keto-5-methylthiopentene (DHK-MTPene). This chain is 2-hydroxy-3-keto-5-methylthiopentenyl-1-phosphate phosphatase, found in Exiguobacterium sp. (strain ATCC BAA-1283 / AT1b).